We begin with the raw amino-acid sequence, 77 residues long: UPF0401 protein ECP_3010 (77 aa).

The protein belongs to the UPF0401 family.

The polypeptide is UPF0401 protein ECP_3010 (Escherichia coli O6:K15:H31 (strain 536 / UPEC)).